A 429-amino-acid polypeptide reads, in one-letter code: GTPase Obg (429 aa).

Residues 1 to 158 enclose the Obg domain; it reads MFVDQVKIYV…RNVQLELKVL (158 aa). A disordered region spans residues 124–145; the sequence is RGNKRFATPANPAPELSENGEP. Residues 159–329 enclose the OBG-type G domain; the sequence is ADVGLVGFPS…LLLAIADKLE (171 aa). Residues 165–172, 190–194, 212–215, 282–285, and 310–312 contribute to the GTP site; these read GFPSVGKS, FTTIV, DLPG, NKMD, and SAV. Residues Ser-172 and Thr-192 each coordinate Mg(2+). Residues 351–429 form the OCT domain; the sequence is KYVAEEPDFE…LLDYEFEFMD (79 aa).

Belongs to the TRAFAC class OBG-HflX-like GTPase superfamily. OBG GTPase family. Monomer. Mg(2+) is required as a cofactor.

It localises to the cytoplasm. Its function is as follows. An essential GTPase which binds GTP, GDP and possibly (p)ppGpp with moderate affinity, with high nucleotide exchange rates and a fairly low GTP hydrolysis rate. Plays a role in control of the cell cycle, stress response, ribosome biogenesis and in those bacteria that undergo differentiation, in morphogenesis control. This is GTPase Obg from Listeria monocytogenes serotype 4b (strain F2365).